We begin with the raw amino-acid sequence, 3021 residues long: Genome polyprotein (3021 aa).

At serine 2 the chain carries N-acetylserine; by host. The tract at residues serine 2 to lysine 23 is interaction with STAT1. An interaction with EIF2AK2/PKR region spans residues serine 2 to proline 58. The interval serine 2 to arginine 59 is interaction with DDX3X. Positions serine 2–serine 75 are disordered. Residues serine 2 to asparagine 168 are Cytoplasmic-facing. 2 short sequence motifs (nuclear localization signal) span residues proline 5 to arginine 13 and proline 38 to arginine 43. A compositionally biased stretch (basic residues) spans proline 7–isoleucine 16. A Phosphoserine; by host modification is found at serine 53. Short sequence motifs (nuclear localization signal) lie at residues proline 58–proline 64 and proline 66–serine 71. Basic residues predominate over residues proline 58–alanine 68. Residues serine 99 and serine 116 each carry the phosphoserine; by host modification. The important for endoplasmic reticulum and mitochondrial localization stretch occupies residues proline 112–alanine 152. The segment at valine 122–serine 173 is interaction with APOA2. An important for lipid droplets localization region spans residues phenylalanine 164 to glycine 167. The helical transmembrane segment at leucine 169–alanine 189 threads the bilayer. The propeptide at leucine 178–serine 191 is ER anchor for the core protein, removed in mature form by host signal peptidase. Residues alanine 190–glycine 358 are Lumenal-facing. Asparagine 196, asparagine 209, and asparagine 234 each carry an N-linked (GlcNAc...) asparagine; by host glycan. The tract at residues leucine 265–arginine 296 is important for fusion. N-linked (GlcNAc...) asparagine; by host glycosylation is present at asparagine 305. The chain crosses the membrane as a helical span at residues leucine 359–serine 379. Topologically, residues glycine 380–leucine 731 are lumenal. The interval threonine 385–glutamine 412 is HVR1. N-linked (GlcNAc...) (high mannose) asparagine; by host glycosylation is found at asparagine 417, asparagine 423, and asparagine 430. Disulfide bonds link cysteine 429–cysteine 553, cysteine 452–cysteine 459, cysteine 487–cysteine 495, and cysteine 504–cysteine 509. N-linked (GlcNAc...) asparagine; by host glycosylation is present at asparagine 448. The segment at alanine 475 to glycine 479 is HVR2. N-linked (GlcNAc...) asparagine; by host glycosylation occurs at asparagine 476. Residues serine 481–proline 494 form a CD81-binding 1 region. Residue asparagine 533 is glycosylated (N-linked (GlcNAc...) asparagine; by host). The tract at residues proline 545–glycine 552 is CD81-binding 2. An N-linked (GlcNAc...) asparagine; by host glycan is attached at asparagine 557. 4 cysteine pairs are disulfide-bonded: cysteine 565–cysteine 570, cysteine 587–cysteine 591, cysteine 603–cysteine 626, and cysteine 613–cysteine 650. N-linked (GlcNAc...) (high mannose) asparagine; by host glycans are attached at residues asparagine 629 and asparagine 651. A disulfide bond links cysteine 658 and cysteine 683. The PKR/eIF2-alpha phosphorylation homology domain (PePHD) stretch occupies residues serine 666–glutamate 677. The helical transmembrane segment at leucine 732–alanine 752 threads the bilayer. Over alanine 753–valine 763 the chain is Lumenal. The helical transmembrane segment at alanine 764–valine 784 threads the bilayer. Topologically, residues arginine 785–lysine 787 are cytoplasmic. Residues leucine 788–leucine 809 form a helical membrane-spanning segment. Residues proline 810–glutamate 819 lie on the Lumenal side of the membrane. The chain crosses the membrane as a helical span at residues aspartate 820–tryptophan 840. Topologically, residues tyrosine 841–tryptophan 844 are cytoplasmic. A helical membrane pass occupies residues isoleucine 845 to histidine 864. Residues valine 865–tyrosine 887 are Lumenal-facing. Residues proline 888–isoleucine 908 traverse the membrane as a helical segment. Positions leucine 905–leucine 1032 constitute a Peptidase C18 domain. The Cytoplasmic segment spans residues glutamine 909–threonine 1663. Positions alanine 910 to arginine 1212 are protease NS2-3. Cysteine 928 carries S-palmitoyl cysteine; by host lipidation. Residues methionine 935 to leucine 955 form an interaction with host SCPS1 region. Active-site for protease NS2 activity; shared with dimeric partner residues include histidine 958, glutamate 978, and cysteine 999. Residues alanine 1033–proline 1214 enclose the Peptidase S29 domain. Residues histidine 1089 and aspartate 1113 each act as charge relay system; for serine protease NS3 activity in the active site. Zn(2+) contacts are provided by cysteine 1129 and cysteine 1131. Serine 1171 serves as the catalytic Charge relay system; for serine protease NS3 activity. The Zn(2+) site is built by cysteine 1177 and histidine 1181. The region spanning proline 1223–serine 1375 is the Helicase ATP-binding domain. Alanine 1236–serine 1243 is a binding site for ATP. Residue serine 1243 participates in Mg(2+) binding. Residues aspartate 1322 to histidine 1325 carry the DECH box motif. A Helicase C-terminal domain is found at tyrosine 1382–arginine 1544. The interval glutamine 1492 to threonine 1504 is RNA-binding. The helical transmembrane segment at serine 1664 to glycine 1684 threads the bilayer. Residues cysteine 1685–glycine 1696 form an NS3-binding region. The Cytoplasmic segment spans residues cysteine 1685 to glutamine 1811. The chain crosses the membrane as a helical span at residues threonine 1812–glutamine 1830. At alanine 1831–alanine 1834 the chain is on the lumenal side. The helical transmembrane segment at phenylalanine 1835–leucine 1855 threads the bilayer. Aspartate 1856 is a topological domain (cytoplasmic). A helical membrane pass occupies residues isoleucine 1857–glycine 1877. At glutamate 1878–asparagine 1887 the chain is on the lumenal side. Residues leucine 1888–leucine 1908 form a helical membrane-spanning segment. At arginine 1909 to cysteine 1978 the chain is on the cytoplasmic side. The S-palmitoyl cysteine; by host moiety is linked to residue cysteine 1978. Residues serine 1979 to alanine 2008 lie within the membrane without spanning it. At leucine 2009–arginine 3000 the chain is on the cytoplasmic side. Zn(2+) contacts are provided by cysteine 2017, cysteine 2035, cysteine 2037, and cysteine 2058. An FKBP8-binding region spans residues glutamate 2126 to alanine 2214. The segment at glutamate 2126 to threonine 2338 is transcriptional activation. The tract at residues proline 2141–proline 2145 is interaction with non-structural protein 4A. The tract at residues alanine 2193–proline 2215 is disordered. Residues arginine 2195 to glutamate 2448 are interaction with host SKP2. Serine 2200, serine 2203, serine 2207, serine 2210, serine 2213, and serine 2216 each carry phosphoserine; by host. Low complexity predominate over residues serine 2200–proline 2215. An ISDR region spans residues serine 2216–lysine 2255. The interval serine 2216 to phenylalanine 2281 is interaction with EIF2AK2/PKR. Residues lysine 2255–tyrosine 2312 form an NS4B-binding region. The V3 stretch occupies residues aspartate 2305 to valine 2383. 2 disordered regions span residues histidine 2318–threonine 2338 and lysine 2356–valine 2419. An SH3-binding motif is present at residues proline 2328–proline 2331. Residues proline 2333 to leucine 2341 carry the Nuclear localization signal motif. Lysine 2356 is covalently cross-linked (Glycyl lysine isopeptide (Lys-Gly) (interchain with G-Cter in ubiquitin)). The segment covering proline 2359 to serine 2381 has biased composition (low complexity). A phosphoserine; by host mark is found at serine 2459 and serine 2472. One can recognise a RdRp catalytic domain in the interval proline 2644–aspartate 2762. The Mg(2+) site is built by aspartate 2650, aspartate 2748, and aspartate 2749. A helical membrane pass occupies residues tyrosine 3001–arginine 3021.

Belongs to the hepacivirus polyprotein family. Homooligomer. Interacts with E1 (via C-terminus). Interacts with the non-structural protein 5A. Interacts (via N-terminus) with host STAT1 (via SH2 domain); this interaction results in decreased STAT1 phosphorylation and ubiquitin-mediated proteasome-dependent STAT1 degradation, leading to decreased IFN-stimulated gene transcription. Interacts with host STAT3; this interaction constitutively activates STAT3. Interacts with host LTBR receptor. Interacts with host TNFRSF1A receptor and possibly induces apoptosis. Interacts with host HNRPK. Interacts with host YWHAE. Interacts with host UBE3A/E6AP. Interacts with host DDX3X. Interacts with host APOA2. Interacts with host RXRA protein. Interacts with host SP110 isoform 3/Sp110b; this interaction sequesters the transcriptional corepressor SP110 away from the nucleus. Interacts with host CREB3 nuclear transcription protein; this interaction triggers cell transformation. Interacts with host ACY3. Interacts with host C1QR1. Interacts with host RBM24; this interaction, which enhances the interaction of the mature core protein with 5'-UTR, may inhibit viral translation and favor replication. Interacts with host EIF2AK2/PKR; this interaction induces the autophosphorylation of EIF2AK2. Part of the viral assembly initiation complex composed of NS2, E1, E2, NS3, NS4A, NS5A and the mature core protein. In terms of assembly, forms a heterodimer with envelope glycoprotein E2. Interacts with mature core protein. Interacts with protease NS2. The heterodimer E1/E2 interacts with host CLDN1; this interaction plays a role in viral entry into host cell. Interacts with host SPSB2 (via C-terminus). Part of the viral assembly initiation complex composed of NS2, E1, E2, NS3, NS4A, NS5A and the mature core protein. Interacts with host NEURL3; this interaction prevents E1 binding to glycoprotein E2. As to quaternary structure, forms a heterodimer with envelope glycoprotein E1. Interacts with host CD81 and SCARB1 receptors; these interactions play a role in viral entry into host cell. Interacts with host EIF2AK2/PKR; this interaction inhibits EIF2AK2 and probably allows the virus to evade the innate immune response. Interacts with host CD209/DC-SIGN and CLEC4M/DC-SIGNR. Interact with host SPCS1; this interaction is essential for viral particle assembly. Interacts with protease NS2. The heterodimer E1/E2 interacts with host CLDN1; this interaction plays a role in viral entry into host cell. Part of the viral assembly initiation complex composed of NS2, E1, E2, NS3, NS4A, NS5A and the mature core protein. Interacts with host SLC3A2/4F2hc; the interaction may facilitate viral entry into host cell. Interacts with human PLSCR1. Homohexamer. Homoheptamer. Interacts with protease NS2. In terms of assembly, homodimer. Interacts with host SPCS1; this interaction is essential for viral particle assembly. Interacts with envelope glycoprotein E1. Interacts with envelope glycoprotein E2. Interacts with viroporin p7. Interacts with serine protease/helicase NS3. Part of the replication complex composed of NS2, NS3, NS4A, NS4B, NS5A and the RNA-directed RNA polymerase embedded in an ER-derived membranous web. Part of the viral assembly initiation complex composed of NS2, E1, E2, NS3, NS4A, NS5A and the mature core protein. As to quaternary structure, interacts with protease NS2. Interacts with non-structural protein 4A; this interaction stabilizes the folding of NS3 serine protease. NS3-NS4A interaction is essential for NS3 activation and allows membrane anchorage of the latter. NS3/NS4A complex also prevents phosphorylation of host IRF3, thus preventing the establishment of dsRNA induced antiviral state. Interacts with host MAVS; this interaction leads to the cleavage and inhibition of host MAVS. Interacts with host TICAM1; this interaction leads to the cleavage and inhibition of host TICAM1. Interacts with host TANK-binding kinase/TBK1; this interaction results in the inhibition of the association between TBK1 and IRF3, which leads to the inhibition of IRF3 activation. Interacts with host RBM24. Part of the replication complex composed of NS2, NS3, NS4A, NS4B, NS5A and the RNA-directed RNA polymerase embedded in an ER-derived membranous web. Part of the viral assembly initiation complex composed of NS2, E1, E2, NS3, NS4A, NS5A and the mature core protein. Interacts with NS3 serine protease; this interaction stabilizes the folding of NS3 serine protease. NS3-NS4A interaction is essential for NS3 activation and allows membrane anchorage of the latter. Interacts with non-structural protein 5A (via N-terminus). Part of the replication complex composed of NS2, NS3, NS4A, NS4B, NS5A and the RNA-directed RNA polymerase embedded in an ER-derived membranous web. Part of the viral assembly initiation complex composed of NS2, E1, E2, NS3, NS4A, NS5A and the mature core protein. In terms of assembly, homomultimer. Interacts with non-structural protein NS5A. Interacts with host PLA2G4C; this interaction likely initiates the recruitment of replication complexes to lipid droplets. Interacts with host STING; this interaction disrupts the interaction between STING and TBK1 thereby suppressing the interferon signaling. Part of the replication complex composed of NS2, NS3, NS4A, NS4B, NS5A and the RNA-directed RNA polymerase embedded in an ER-derived membranous web. As to quaternary structure, monomer. Homodimer; dimerization is required for RNA-binding. Interacts with the mature core protein. Interacts (via N-terminus) with non-structural protein 4A. Interacts with non-structural protein 4B. Interacts (via region D2) with RNA-directed RNA polymerase. Part of the viral assembly initiation complex composed of NS2, E1, E2, NS3, NS4A, NS5A and the mature core protein. Part of the replication complex composed of NS2, NS3, NS4A, NS4B, NS5A and the RNA-directed RNA polymerase embedded in an ER-derived membranous web. Interacts with host GRB2. Interacts with host BIN1. Interacts with host PIK3R1. Interacts with host SRCAP. Interacts with host FKBP8. Interacts (via C-terminus) with host VAPB (via MSP domain). Interacts with host EIF2AK2/PKR; this interaction leads to disruption of EIF2AK2 dimerization by NS5A and probably allows the virus to evade the innate immune response. Interacts (via N-terminus) with host PACSIN2 (via N-terminus); this interaction attenuates protein kinase C alpha-mediated phosphorylation of PACSIN2 by disrupting the interaction between PACSIN2 and PRKCA. Interacts (via N-terminus) with host SRC kinase (via SH2 domain). Interacts with most Src-family kinases. Interacts with host IFI27 and SKP2; promotes the ubiquitin-mediated proteasomal degradation of NS5A. Interacts with host GPS2. Interacts with host TNFRSF21; this interaction allows the modulation by the virus of JNK, p38 MAPK, STAT3, and Akt signaling pathways in a DR6-dependent manner. Interacts (via N-terminus) with host CIDEB (via N-terminus); this interaction seems to regulate the association of HCV particles with APOE. Interacts with host CHKA/Choline Kinase-alpha; CHKA bridges host PI4KA and NS5A and potentiates NS5A-stimulated PI4KA activity, which then facilitates the targeting of the ternary complex to the ER for viral replication. Interacts with host SPSB2 (via C-terminus); this interaction targets NS5A for ubiquitination and degradation. Interacts with host RAB18; this interaction may promote the association of NS5A and other replicase components with lipid droplets. Interacts (via region D2) with host PPIA/CYPA; the interaction stimulates RNA-binding ability of NS5A and is dependent on the peptidyl-prolyl cis-trans isomerase activity of PPIA/CYPA. Interacts with host TRIM14; this interaction induces the degradation of NS5A. Homooligomer. Interacts with non-structural protein 5A. Interacts with host VAPB. Interacts with host PRK2/PKN2. Interacts with host HNRNPA1 and SEPT6; these interactions facilitate viral replication. Part of the replication complex composed of NS2, NS3, NS4A, NS4B, NS5A and the RNA-directed RNA polymerase. The cofactor is Zn(2+). Mg(2+) is required as a cofactor. Post-translationally, specific enzymatic cleavages in vivo yield mature proteins. The structural proteins, core, E1, E2 and p7 are produced by proteolytic processing by host signal peptidases. The core protein precursor is synthesized as a 23 kDa, which is retained in the ER membrane through the hydrophobic signal peptide. Cleavage by the signal peptidase releases the 21 kDa mature core protein. The cleavage of the core protein precursor occurs between aminoacids 176 and 188 but the exact cleavage site is not known. Some degraded forms of the core protein appear as well during the course of infection. The other proteins (p7, NS2, NS3, NS4A, NS4B, NS5A and NS5B) are cleaved by the viral proteases. Autoprocessing between NS2 and NS3 is mediated by the NS2 cysteine protease catalytic domain and regulated by the NS3 N-terminal domain. Phosphorylated by host PKC and PKA. In terms of processing, ubiquitinated; mediated by UBE3A and leading to core protein subsequent proteasomal degradation. Post-translationally, highly N-glycosylated. Palmitoylation is required for NS2/3 autoprocessing and E2 recruitment to membranes. In terms of processing, palmitoylated. This modification may play a role in its polymerization or in protein-protein interactions. Post-translationally, phosphorylated on serines in a basal form termed p56. p58 is a hyperphosphorylated form of p56. p56 and p58 coexist in the cell in roughly equivalent amounts. Hyperphosphorylation is dependent on the presence of NS4A. Host CSNK1A1/CKI-alpha or RPS6KB1 kinases may be responsible for NS5A phosphorylation. Tyrosine phosphorylation is essential for the interaction with host SRC. In terms of processing, ubiquitinated. Ubiquitination, most probably at Lys-2356, mediated by host IFI27 and SKP2 leads to proteasomal degradation, restricting viral infection. Ubiquitination by host TRIM22 leads to interruption of viral replication. Post-translationally, the N-terminus is phosphorylated by host PRK2/PKN2.

The protein localises to the host endoplasmic reticulum membrane. It localises to the host mitochondrion membrane. The protein resides in the virion. It is found in the host cytoplasm. Its subcellular location is the host nucleus. The protein localises to the host lipid droplet. It localises to the virion membrane. The protein resides in the host mitochondrion. It is found in the host cell membrane. Its subcellular location is the host perinuclear region. It carries out the reaction Hydrolysis of four peptide bonds in the viral precursor polyprotein, commonly with Asp or Glu in the P6 position, Cys or Thr in P1 and Ser or Ala in P1'.. The enzyme catalyses a ribonucleoside 5'-triphosphate + H2O = a ribonucleoside 5'-diphosphate + phosphate + H(+). The catalysed reaction is ATP + H2O = ADP + phosphate + H(+). It catalyses the reaction RNA(n) + a ribonucleoside 5'-triphosphate = RNA(n+1) + diphosphate. With respect to regulation, inhibited by the antiviral drug hexamethylene amiloride. Inhibition by amantadine appears to be genotype-dependent. Also inhibited by long-alkyl-chain iminosugar derivatives. Its activity is regulated as follows. Activity is up-regulated by PRK2/PKN2-mediated phosphorylation. Functionally, packages viral RNA to form a viral nucleocapsid, and promotes virion budding. Participates in the viral particle production as a result of its interaction with the non-structural protein 5A. Binds RNA and may function as a RNA chaperone to induce the RNA structural rearrangements taking place during virus replication. Modulates viral translation initiation by interacting with viral IRES and 40S ribosomal subunit. Affects various cell signaling pathways, host immunity and lipid metabolism. Prevents the establishment of cellular antiviral state by blocking the interferon-alpha/beta (IFN-alpha/beta) and IFN-gamma signaling pathways and by blocking the formation of phosphorylated STAT1 and promoting ubiquitin-mediated proteasome-dependent degradation of STAT1. Activates STAT3 leading to cellular transformation. Regulates the activity of cellular genes, including c-myc and c-fos. May repress the promoter of p53, and sequester CREB3 and SP110 isoform 3/Sp110b in the cytoplasm. Represses cell cycle negative regulating factor CDKN1A, thereby interrupting an important check point of normal cell cycle regulation. Targets transcription factors involved in the regulation of inflammatory responses and in the immune response: suppresses TNF-induced NF-kappa-B activation, and activates AP-1. Binds to dendritic cells (DCs) via C1QR1, resulting in down-regulation of T-lymphocytes proliferation. Alters lipid metabolism by interacting with hepatocellular proteins involved in lipid accumulation and storage. Induces up-regulation of FAS promoter activity, and thereby contributes to the increased triglyceride accumulation in hepatocytes (steatosis). In terms of biological role, forms a heterodimer with envelope glycoprotein E2, which mediates virus attachment to the host cell, virion internalization through clathrin-dependent endocytosis and fusion with host membrane. Fusion with the host cell is most likely mediated by both E1 and E2, through conformational rearrangements of the heterodimer required for fusion rather than a classical class II fusion mechanism. E1/E2 heterodimer binds host apolipoproteins such as APOB and ApoE thereby forming a lipo-viro-particle (LVP). APOE associated to the LVP allows the initial virus attachment to cell surface receptors such as the heparan sulfate proteoglycans (HSPGs), syndecan-1 (SDC1), syndecan-1 (SDC2), the low-density lipoprotein receptor (LDLR) and scavenger receptor class B type I (SCARB1). The cholesterol transfer activity of SCARB1 allows E2 exposure and binding of E2 to SCARB1 and the tetraspanin CD81. E1/E2 heterodimer binding on CD81 activates the epithelial growth factor receptor (EGFR) signaling pathway. Diffusion of the complex E1-E2-EGFR-SCARB1-CD81 to the cell lateral membrane allows further interaction with Claudin 1 (CLDN1) and occludin (OCLN) to finally trigger HCV entry. Its function is as follows. Forms a heterodimer with envelope glycoprotein E1, which mediates virus attachment to the host cell, virion internalization through clathrin-dependent endocytosis and fusion with host membrane. Fusion with the host cell is most likely mediated by both E1 and E2, through conformational rearrangements of the heterodimer required for fusion rather than a classical class II fusion mechanism. The interaction between envelope glycoprotein E2 and host apolipoprotein E/APOE allows the proper assembly, maturation and infectivity of the viral particles. This interaction is probably promoted via the up-regulation of cellular autophagy by the virus. E1/E2 heterodimer binds host apolipoproteins such as APOB and APOE thereby forming a lipo-viro-particle (LVP). APOE associated to the LVP allows the initial virus attachment to cell surface receptors such as the heparan sulfate proteoglycans (HSPGs), syndecan-1 (SDC1), syndecan-1 (SDC2), the low-density lipoprotein receptor (LDLR) and scavenger receptor class B type I (SCARB1). The cholesterol transfer activity of SCARB1 allows E2 exposure and binding of E2 to SCARB1 and the tetraspanin CD81. E1/E2 heterodimer binding on CD81 activates the epithelial growth factor receptor (EGFR) signaling pathway. Diffusion of the complex E1-E2-EGFR-SCARB1-CD81 to the cell lateral membrane allows further interaction with Claudin 1 (CLDN1) and occludin (OCLN) to finally trigger HCV entry. Inhibits host EIF2AK2/PKR activation, preventing the establishment of an antiviral state. Viral ligand for CD209/DC-SIGN and CLEC4M/DC-SIGNR, which are respectively found on dendritic cells (DCs), and on liver sinusoidal endothelial cells and macrophage-like cells of lymph node sinuses. These interactions allow the capture of circulating HCV particles by these cells and subsequent facilitated transmission to permissive cells such as hepatocytes and lymphocyte subpopulations. The interaction between E2 and host amino acid transporter complex formed by SLC3A2 and SLC7A5/LAT1 may facilitate viral entry into host cell. Ion channel protein that acts as a viroporin and plays an essential role in the assembly, envelopment and secretion of viral particles. Regulates the host cell secretory pathway, which induces the intracellular retention of viral glycoproteins and favors assembly of viral particles. Creates a pore in acidic organelles and releases Ca(2+) and H(+) in the cytoplasm of infected cells, leading to a productive viral infection. High levels of cytoplasmic Ca(2+) may trigger membrane trafficking and transport of viral ER-associated proteins to viroplasms, sites of viral genome replication. This ionic imbalance induces the assembly of the inflammasome complex, which triggers the maturation of pro-IL-1beta into IL-1beta through the action of caspase-1. Targets also host mitochondria and induces mitochondrial depolarization. In addition of its role as a viroporin, acts as a lipid raft adhesion factor. Functionally, cysteine protease required for the proteolytic auto-cleavage between the non-structural proteins NS2 and NS3. The N-terminus of NS3 is required for the function of NS2 protease (active region NS2-3). Promotes the initiation of viral particle assembly by mediating the interaction between structural and non-structural proteins. In terms of biological role, displays three enzymatic activities: serine protease with a chymotrypsin-like fold, NTPase and RNA helicase. NS3 serine protease, in association with NS4A, is responsible for the cleavages of NS3-NS4A, NS4A-NS4B, NS4B-NS5A and NS5A-NS5B. The NS3/NS4A complex prevents phosphorylation of host IRF3, thus preventing the establishment of dsRNA induced antiviral state. The NS3/NS4A complex induces host amino acid transporter component SLC3A2, thus contributing to HCV propagation. NS3 RNA helicase binds to RNA and unwinds both dsDNA and dsRNA in the 3' to 5' direction, and likely resolves RNA complicated stable secondary structures in the template strand. Binds a single ATP and catalyzes the unzipping of a single base pair of dsRNA. Inhibits host antiviral proteins TBK1 and IRF3 thereby preventing the establishment of an antiviral state. Cleaves host MAVS/CARDIF thereby preventing the establishment of an antiviral state. Cleaves host TICAM1/TRIF, thereby disrupting TLR3 signaling and preventing the establishment of an antiviral state. Its function is as follows. Peptide cofactor which forms a non-covalent complex with the N-terminal of NS3 serine protease. The NS3/NS4A complex prevents phosphorylation of host IRF3, thus preventing the establishment of dsRNA induced antiviral state. The NS3/NS4A complex induces host amino acid transporter component SLC3A2, thus contributing to HCV propagation. Induces a specific membrane alteration that serves as a scaffold for the virus replication complex. This membrane alteration gives rise to the so-called ER-derived membranous web that contains the replication complex. NS4B self-interaction contributes to its function in membranous web formation. Promotes host TRIF protein degradation in a CASP8-dependent manner thereby inhibiting host TLR3-mediated interferon signaling. Disrupts the interaction between STING and TBK1 contributing to the inhibition of interferon signaling. Functionally, phosphorylated protein that is indispensable for viral replication and assembly. Both hypo- and hyperphosphorylated states are required for the viral life cycle. The hyperphosphorylated form of NS5A is an inhibitor of viral replication. Involved in RNA-binding and especially in binding to the viral genome. Zinc is essential for RNA-binding. Participates in the viral particle production as a result of its interaction with the mature viral core protein. Its interaction with host VAPB may target the viral replication complex to vesicles. Down-regulates viral IRES translation initiation. Mediates interferon resistance, presumably by interacting with and inhibiting host EIF2AK2/PKR. Prevents BIN1-induced apoptosis. Acts as a transcriptional activator of some host genes important for viral replication when localized in the nucleus. Via the interaction with host PACSIN2, modulates lipid droplet formation in order to promote virion assembly. Modulates TNFRSF21/DR6 signaling pathway for viral propagation. In terms of biological role, RNA-dependent RNA polymerase that performs primer-template recognition and RNA synthesis during viral replication. Initiates RNA transcription/replication at a flavin adenine dinucleotide (FAD), resulting in a 5'- FAD cap on viral RNAs. In this way, recognition of viral 5' RNA by host pattern recognition receptors can be bypassed, thereby evading activation of antiviral pathways. In Homo sapiens (Human), this protein is Genome polyprotein.